The primary structure comprises 330 residues: Probable transposase for insertion sequence element ISH11 (330 aa).

Belongs to the transposase 11 family.

Involved in the transposition of the insertion sequence ISH11. This chain is Probable transposase for insertion sequence element ISH11, found in Halobacterium salinarum (strain ATCC 29341 / DSM 671 / R1).